The primary structure comprises 172 residues: Protein GrpE (172 aa).

The protein belongs to the GrpE family. As to quaternary structure, homodimer.

It is found in the cytoplasm. Its function is as follows. Participates actively in the response to hyperosmotic and heat shock by preventing the aggregation of stress-denatured proteins, in association with DnaK and GrpE. It is the nucleotide exchange factor for DnaK and may function as a thermosensor. Unfolded proteins bind initially to DnaJ; upon interaction with the DnaJ-bound protein, DnaK hydrolyzes its bound ATP, resulting in the formation of a stable complex. GrpE releases ADP from DnaK; ATP binding to DnaK triggers the release of the substrate protein, thus completing the reaction cycle. Several rounds of ATP-dependent interactions between DnaJ, DnaK and GrpE are required for fully efficient folding. This is Protein GrpE from Thermotoga maritima (strain ATCC 43589 / DSM 3109 / JCM 10099 / NBRC 100826 / MSB8).